A 380-amino-acid chain; its full sequence is Methenyltetrahydrofolate synthase domain-containing protein (380 aa).

Positions 245-258 are enriched in basic and acidic residues; sequence EEQAGKDVTLRDGP. Disordered regions lie at residues 245–283 and 361–380; these read EEQA…PLSS and LVGS…IAGP. The RRM domain occupies 282 to 355; sequence SSVQIGNLPR…NTVRVVLARQ (74 aa).

The chain is Methenyltetrahydrofolate synthase domain-containing protein (MTHFSD) from Bos taurus (Bovine).